Reading from the N-terminus, the 248-residue chain is 3-deoxy-manno-octulosonate cytidylyltransferase (248 aa).

The protein belongs to the KdsB family.

It localises to the cytoplasm. It catalyses the reaction 3-deoxy-alpha-D-manno-oct-2-ulosonate + CTP = CMP-3-deoxy-beta-D-manno-octulosonate + diphosphate. It functions in the pathway nucleotide-sugar biosynthesis; CMP-3-deoxy-D-manno-octulosonate biosynthesis; CMP-3-deoxy-D-manno-octulosonate from 3-deoxy-D-manno-octulosonate and CTP: step 1/1. Its pathway is bacterial outer membrane biogenesis; lipopolysaccharide biosynthesis. Activates KDO (a required 8-carbon sugar) for incorporation into bacterial lipopolysaccharide in Gram-negative bacteria. The sequence is that of 3-deoxy-manno-octulosonate cytidylyltransferase from Escherichia coli O139:H28 (strain E24377A / ETEC).